Consider the following 74-residue polypeptide: Small ribosomal subunit protein eS17 (74 aa).

Belongs to the eukaryotic ribosomal protein eS17 family.

This is Small ribosomal subunit protein eS17 from Aeropyrum pernix (strain ATCC 700893 / DSM 11879 / JCM 9820 / NBRC 100138 / K1).